The sequence spans 153 residues: Large ribosomal subunit protein bL9 (153 aa).

The protein belongs to the bacterial ribosomal protein bL9 family.

In terms of biological role, binds to the 23S rRNA. This chain is Large ribosomal subunit protein bL9, found in Mycoplasma mycoides subsp. mycoides SC (strain CCUG 32753 / NCTC 10114 / PG1).